The chain runs to 203 residues: Small ribosomal subunit protein uS4c (203 aa).

Residues 15-42 (LGALPGLTSKRPRAGSDPRNQELSGNKS) form a disordered region. Residues 89–150 (MRLDNILFRL…DQKSKAMIQN (62 aa)) form the S4 RNA-binding domain.

This sequence belongs to the universal ribosomal protein uS4 family. Part of the 30S ribosomal subunit. Contacts protein S5. The interaction surface between S4 and S5 is involved in control of translational fidelity.

Its subcellular location is the plastid. It localises to the chloroplast. One of the primary rRNA binding proteins, it binds directly to 16S rRNA where it nucleates assembly of the body of the 30S subunit. In terms of biological role, with S5 and S12 plays an important role in translational accuracy. This chain is Small ribosomal subunit protein uS4c (rps4), found in Oenothera elata subsp. hookeri (Hooker's evening primrose).